The chain runs to 272 residues: HMP-PP phosphatase (272 aa).

Aspartate 8 functions as the Nucleophile in the catalytic mechanism. Mg(2+) is bound by residues aspartate 8, aspartate 10, and aspartate 212.

Belongs to the HAD-like hydrolase superfamily. Cof family. Mg(2+) is required as a cofactor.

The catalysed reaction is 4-amino-2-methyl-5-(diphosphooxymethyl)pyrimidine + H2O = 4-amino-2-methyl-5-(phosphooxymethyl)pyrimidine + phosphate + H(+). Its function is as follows. Catalyzes the hydrolysis of 4-amino-2-methyl-5-hydroxymethylpyrimidine pyrophosphate (HMP-PP) to 4-amino-2-methyl-5-hydroxymethylpyrimidine phosphate (HMP-P). The sequence is that of HMP-PP phosphatase from Escherichia coli O81 (strain ED1a).